We begin with the raw amino-acid sequence, 315 residues long: PIH1 domain-containing protein 2 (315 aa).

Belongs to the PIH1 family.

This is PIH1 domain-containing protein 2 (Pih1d2) from Mus musculus (Mouse).